We begin with the raw amino-acid sequence, 722 residues long: Tegument protein UL46 (722 aa).

Residues 423–534 (RLAASGPPGG…AAAARPLAAQ (112 aa)) form a disordered region. Basic and acidic residues-rich tracts occupy residues 440 to 451 (CRDKIQRTRRDN) and 474 to 491 (HRED…DRGP). Pro residues predominate over residues 510–522 (PRLPPRNPAPPEQ). Positions 523 to 534 (RPAAAARPLAAQ) are enriched in low complexity.

This sequence belongs to the herpesviridae HHV-1 VP11/12 protein family. As to quaternary structure, interacts with VP16. Interacts with host LCK, PIK3R1, SHC1 AND GRB2; these interactions promote the activation of the PI3K/AKT pathway. Interacts with host YWHAB. Interacts with ICP0; this interaction targets UL46 for degradation by the proteasome. Post-translationally, phosphorylated by host LCK. The phosphorylation seems to be lymphocyte-specific.

The protein resides in the virion tegument. It localises to the host cell membrane. Plays a role in the activation of the host PI3K/AKT pathway to promote cell survival. Interacts with and activates host LCK and thereby recruits downstream partners SHC1, GRB2 and PI3KR1 in order to activate the PI3K pathway by phosphorylating host AKT on its activating residues. This mechanism is inhibited by the viral protein US3 that instead promotes incorporation of UL46 into virions. The protein is Tegument protein UL46 of Homo sapiens (Human).